The primary structure comprises 180 residues: Large ribosomal subunit protein uL5 (180 aa).

This sequence belongs to the universal ribosomal protein uL5 family. Part of the 50S ribosomal subunit; part of the 5S rRNA/L5/L18/L25 subcomplex. Contacts the 5S rRNA and the P site tRNA. Forms a bridge to the 30S subunit in the 70S ribosome.

Functionally, this is one of the proteins that bind and probably mediate the attachment of the 5S RNA into the large ribosomal subunit, where it forms part of the central protuberance. In the 70S ribosome it contacts protein S13 of the 30S subunit (bridge B1b), connecting the 2 subunits; this bridge is implicated in subunit movement. Contacts the P site tRNA; the 5S rRNA and some of its associated proteins might help stabilize positioning of ribosome-bound tRNAs. This is Large ribosomal subunit protein uL5 from Oenococcus oeni (strain ATCC BAA-331 / PSU-1).